The sequence spans 585 residues: 4-hydroxy-3-methylbut-2-en-1-yl diphosphate synthase (flavodoxin) (585 aa).

Positions 492, 495, 526, and 533 each coordinate [4Fe-4S] cluster.

This sequence belongs to the IspG family. [4Fe-4S] cluster is required as a cofactor.

The enzyme catalyses (2E)-4-hydroxy-3-methylbut-2-enyl diphosphate + oxidized [flavodoxin] + H2O + 2 H(+) = 2-C-methyl-D-erythritol 2,4-cyclic diphosphate + reduced [flavodoxin]. The protein operates within isoprenoid biosynthesis; isopentenyl diphosphate biosynthesis via DXP pathway; isopentenyl diphosphate from 1-deoxy-D-xylulose 5-phosphate: step 5/6. Converts 2C-methyl-D-erythritol 2,4-cyclodiphosphate (ME-2,4cPP) into 1-hydroxy-2-methyl-2-(E)-butenyl 4-diphosphate. In Akkermansia muciniphila (strain ATCC BAA-835 / DSM 22959 / JCM 33894 / BCRC 81048 / CCUG 64013 / CIP 107961 / Muc), this protein is 4-hydroxy-3-methylbut-2-en-1-yl diphosphate synthase (flavodoxin).